The sequence spans 251 residues: tRNA (guanine-N(1)-)-methyltransferase (251 aa).

S-adenosyl-L-methionine-binding positions include Gly-114 and Ile-134–Leu-139.

The protein belongs to the RNA methyltransferase TrmD family. In terms of assembly, homodimer.

Its subcellular location is the cytoplasm. The enzyme catalyses guanosine(37) in tRNA + S-adenosyl-L-methionine = N(1)-methylguanosine(37) in tRNA + S-adenosyl-L-homocysteine + H(+). In terms of biological role, specifically methylates guanosine-37 in various tRNAs. The chain is tRNA (guanine-N(1)-)-methyltransferase from Pelotomaculum thermopropionicum (strain DSM 13744 / JCM 10971 / SI).